We begin with the raw amino-acid sequence, 326 residues long: tRNA dimethylallyltransferase (326 aa).

18-25 (GPTASGKS) is a binding site for ATP. Position 20–25 (20–25 (TASGKS)) interacts with substrate. 2 interaction with substrate tRNA regions span residues 43–46 (DSMQ) and 167–171 (QRIAR).

Belongs to the IPP transferase family. As to quaternary structure, monomer. It depends on Mg(2+) as a cofactor.

It catalyses the reaction adenosine(37) in tRNA + dimethylallyl diphosphate = N(6)-dimethylallyladenosine(37) in tRNA + diphosphate. Its function is as follows. Catalyzes the transfer of a dimethylallyl group onto the adenine at position 37 in tRNAs that read codons beginning with uridine, leading to the formation of N6-(dimethylallyl)adenosine (i(6)A). The polypeptide is tRNA dimethylallyltransferase (Rhodospirillum rubrum (strain ATCC 11170 / ATH 1.1.1 / DSM 467 / LMG 4362 / NCIMB 8255 / S1)).